The chain runs to 445 residues: Phosphoglucosamine mutase (445 aa).

Residue S102 is the Phosphoserine intermediate of the active site. Mg(2+) contacts are provided by S102, D241, D243, and D245. S102 carries the post-translational modification Phosphoserine.

It belongs to the phosphohexose mutase family. Mg(2+) serves as cofactor. Activated by phosphorylation.

It carries out the reaction alpha-D-glucosamine 1-phosphate = D-glucosamine 6-phosphate. Its function is as follows. Catalyzes the conversion of glucosamine-6-phosphate to glucosamine-1-phosphate. The chain is Phosphoglucosamine mutase from Escherichia fergusonii (strain ATCC 35469 / DSM 13698 / CCUG 18766 / IAM 14443 / JCM 21226 / LMG 7866 / NBRC 102419 / NCTC 12128 / CDC 0568-73).